Here is a 178-residue protein sequence, read N- to C-terminus: Protein GrpE (178 aa).

This sequence belongs to the GrpE family. As to quaternary structure, homodimer.

The protein resides in the cytoplasm. Its function is as follows. Participates actively in the response to hyperosmotic and heat shock by preventing the aggregation of stress-denatured proteins, in association with DnaK and GrpE. It is the nucleotide exchange factor for DnaK and may function as a thermosensor. Unfolded proteins bind initially to DnaJ; upon interaction with the DnaJ-bound protein, DnaK hydrolyzes its bound ATP, resulting in the formation of a stable complex. GrpE releases ADP from DnaK; ATP binding to DnaK triggers the release of the substrate protein, thus completing the reaction cycle. Several rounds of ATP-dependent interactions between DnaJ, DnaK and GrpE are required for fully efficient folding. This is Protein GrpE from Rickettsia typhi (strain ATCC VR-144 / Wilmington).